Consider the following 442-residue polypeptide: Serum response factor-binding protein 1 (442 aa).

Coiled coils occupy residues 55-77 (EDAL…AMKE) and 118-140 (LLKR…RQNA). Disordered regions lie at residues 137-336 (RQNA…LETH) and 358-442 (FHSL…TFDD). 2 stretches are compositionally biased toward basic and acidic residues: residues 149–159 (ASKESQCEDIP) and 167–188 (ESQH…DPTT). Lys-202 participates in a covalent cross-link: Glycyl lysine isopeptide (Lys-Gly) (interchain with G-Cter in SUMO2). Ser-215 bears the Phosphoserine mark. Residues 237 to 247 (GNHSQGKASTR) show a composition bias toward polar residues. Positions 266–278 (VSEEEKEYFDDST) are enriched in acidic residues. Phosphoserine is present on residues Ser-277, Ser-292, and Ser-294. Residue Lys-329 forms a Glycyl lysine isopeptide (Lys-Gly) (interchain with G-Cter in SUMO2) linkage. Phosphoserine is present on Ser-362. A compositionally biased stretch (basic and acidic residues) spans 367 to 382 (SRRDPREQAPKNKAPD).

Interacts with SRF. Forms complexes with SRF and SRF cofactors ARID2, MYOCD and NKX2-5. Interacts with the N-terminus of SLC2A4.

It is found in the cytoplasm. The protein localises to the perinuclear region. May be involved in regulating transcriptional activation of cardiac genes during the aging process. May play a role in biosynthesis and/or processing of SLC2A4 in adipose cells. In Rattus norvegicus (Rat), this protein is Serum response factor-binding protein 1.